A 258-amino-acid chain; its full sequence is Acetylglutamate kinase (258 aa).

Substrate is bound by residues 41–42 (GG), R63, and N156.

This sequence belongs to the acetylglutamate kinase family. ArgB subfamily.

It localises to the cytoplasm. The catalysed reaction is N-acetyl-L-glutamate + ATP = N-acetyl-L-glutamyl 5-phosphate + ADP. The protein operates within amino-acid biosynthesis; L-arginine biosynthesis; N(2)-acetyl-L-ornithine from L-glutamate: step 2/4. Catalyzes the ATP-dependent phosphorylation of N-acetyl-L-glutamate. The polypeptide is Acetylglutamate kinase (Geobacillus kaustophilus (strain HTA426)).